Here is an 82-residue protein sequence, read N- to C-terminus: Small ribosomal subunit protein bS16 (82 aa).

It belongs to the bacterial ribosomal protein bS16 family.

This chain is Small ribosomal subunit protein bS16, found in Microcystis aeruginosa (strain NIES-843 / IAM M-2473).